Reading from the N-terminus, the 125-residue chain is Probable 4-amino-4-deoxy-L-arabinose-phosphoundecaprenol flippase subunit ArnF (125 aa).

At 1-2 the chain is on the cytoplasmic side; the sequence is MG. A helical membrane pass occupies residues 3–23; the sequence is VMWGLISVAIASLAQLSLGFA. Residues 24 to 33 lie on the Periplasmic side of the membrane; that stretch reads MMRLPSIAHP. Residues 34–54 form a helical membrane-spanning segment; sequence LAFISGLGALNAATLALFAGL. At 55–76 the chain is on the cytoplasmic side; sequence AGYLVSVFCWHKTLHTLALSKA. A helical membrane pass occupies residues 77–97; sequence YALLSLSYVLVWVASMLLPGL. Topologically, residues 98–100 are periplasmic; that stretch reads QGA. A helical transmembrane segment spans residues 101 to 121; that stretch reads FSLKAMLGVLCIMAGVMLIFL. Residues 122–125 are Cytoplasmic-facing; the sequence is PARS.

Belongs to the ArnF family. As to quaternary structure, heterodimer of ArnE and ArnF.

The protein resides in the cell inner membrane. The protein operates within bacterial outer membrane biogenesis; lipopolysaccharide biosynthesis. In terms of biological role, translocates 4-amino-4-deoxy-L-arabinose-phosphoundecaprenol (alpha-L-Ara4N-phosphoundecaprenol) from the cytoplasmic to the periplasmic side of the inner membrane. The protein is Probable 4-amino-4-deoxy-L-arabinose-phosphoundecaprenol flippase subunit ArnF of Salmonella agona (strain SL483).